The primary structure comprises 768 residues: UPF0313 protein VV2143 (768 aa).

A Radical SAM core domain is found at alanine 363–aspartate 640. The [4Fe-4S] cluster site is built by cysteine 377, cysteine 381, and cysteine 384. The segment at aspartate 674–arginine 768 is disordered. Over residues alanine 679–alanine 689 the composition is skewed to basic residues. Positions glycine 719 to serine 731 are enriched in polar residues.

The protein belongs to the UPF0313 family. Requires [4Fe-4S] cluster as cofactor.

This chain is UPF0313 protein VV2143, found in Vibrio vulnificus (strain YJ016).